Consider the following 505-residue polypeptide: Putative ribose/galactose/methyl galactoside import ATP-binding protein 1 (505 aa).

2 ABC transporter domains span residues 10–245 (LRLE…VGRS) and 256–501 (RPTD…SGYG). Residue 42–49 (GENGAGKS) participates in ATP binding.

This sequence belongs to the ABC transporter superfamily. Carbohydrate importer 2 (CUT2) (TC 3.A.1.2) family.

The protein resides in the cell inner membrane. The enzyme catalyses D-ribose(out) + ATP + H2O = D-ribose(in) + ADP + phosphate + H(+). It carries out the reaction D-galactose(out) + ATP + H2O = D-galactose(in) + ADP + phosphate + H(+). In terms of biological role, part of an ABC transporter complex involved in carbohydrate import. Could be involved in ribose, galactose and/or methyl galactoside import. Responsible for energy coupling to the transport system. In Agrobacterium fabrum (strain C58 / ATCC 33970) (Agrobacterium tumefaciens (strain C58)), this protein is Putative ribose/galactose/methyl galactoside import ATP-binding protein 1.